A 1124-amino-acid polypeptide reads, in one-letter code: SH3 and PX domain-containing protein 2A (1124 aa).

In terms of domain architecture, PX spans 4-128 (YCVQDATVVD…RFFEARPEDV (125 aa)). The 60-residue stretch at 166–225 (MILEQYVVVSNYKKQENSELSLQAGEVVDVIEKNESGWWFVSTSEEQGWVPATYLEAQNG) folds into the SH3 1 domain. Thr-256 is modified (phosphothreonine). Residues 266 to 325 (SREEKYVTVQPYTSQSKDEIGFEKGVTVEVIRKNLEGWWYIRYLGKEGWAPASYLKKAKD) form the SH3 2 domain. Phosphoserine is present on residues Ser-405 and Ser-420. Disordered stretches follow at residues 414-443 (QRAQ…PKPP), 504-672 (RKKP…KLKA), 692-830 (SVTI…PKKE), and 886-952 (YLVA…GKTS). Residues 447–506 (SVEVEYYTIAEFQSCISDGISFRGGQKAEVIDKNSGGWWYVQIGEKEGWAPASYIDKRKK) form the SH3 3 domain. Ser-546 and Ser-566 each carry phosphoserine. Basic and acidic residues predominate over residues 575-585 (SGDRGSGDKHP). Ser-592 carries the post-translational modification Phosphoserine. A compositionally biased stretch (acidic residues) spans 607 to 619 (SSEDVALEEETIY). 2 stretches are compositionally biased toward low complexity: residues 633–669 (SARG…SLLK) and 692–709 (SVTI…SSLS). Ser-643 carries the post-translational modification Phosphoserine. Positions 713–739 (GDLKPRSASDAGIRDTPKVGTKKDPDV) are enriched in basic and acidic residues. At Thr-728 the chain carries Phosphothreonine. Ser-764, Ser-766, and Ser-812 each carry phosphoserine. Thr-822 bears the Phosphothreonine mark. One can recognise an SH3 4 domain in the interval 833-892 (GQGATYVTCSAYQKVQDSEISFPEGAEVHVLEKAESGWWYVRFGELEGWAPSHYLVAEEN). The stretch at 907 to 937 (SSQNEGKSDSLEKIEKRVQALNTVNQSKRAT) forms a coiled coil. The segment covering 912–924 (GKSDSLEKIEKRV) has biased composition (basic and acidic residues). The span at 926 to 935 (ALNTVNQSKR) shows a compositional bias: polar residues. 4 positions are modified to phosphoserine: Ser-993, Ser-1007, Ser-1008, and Ser-1029. The disordered stretch occupies residues 1020–1050 (KGRLAERAASQGSESPLLPTQRKGIPVSPVR). One can recognise an SH3 5 domain in the interval 1063-1124 (NLKDVYISIA…VPSNYLEKKN (62 aa)).

Belongs to the SH3PXD2 family. As to quaternary structure, interacts with ADAM12, ADAM15 and ADAM19. Interacts with NOXO1. Interacts (via SH3 domains) with NOXA1; the interaction is direct. Interacts (via N-terminus) with CYBA. Interacts with FASLG. Interacts (via PX domain) with RAB40B (GTP-bound); interaction promotes invadopodia-mediated extracellular matrix degradation. In terms of processing, tyrosine phosphorylated by SRC. Phosphorylation plays a regulatory role in the protein localization. The intramolecular interaction of the PX domain with the third SH3 domain maintains the protein in the cytoplasm and phosphorylation disrupts this interaction, resulting in the redistribution of the protein from cytoplasm to the perimembrane region. Phosphorylated on serine upon DNA damage, probably by ATM or ATR. Widely expressed. Not found in the spleen and testis.

The protein resides in the cytoplasm. The protein localises to the cell projection. It is found in the podosome. Adapter protein involved in invadopodia and podosome formation, extracellular matrix degradation and invasiveness of some cancer cells. Binds matrix metalloproteinases (ADAMs), NADPH oxidases (NOXs) and phosphoinositides. Acts as an organizer protein that allows NOX1- or NOX3-dependent reactive oxygen species (ROS) generation and ROS localization. In association with ADAM12, mediates the neurotoxic effect of amyloid-beta peptide. The protein is SH3 and PX domain-containing protein 2A of Mus musculus (Mouse).